The sequence spans 24 residues: SAKDVKFGDSARSMMIAGVNVIAD.

This sequence belongs to the chaperonin (HSP60) family. In terms of assembly, forms a cylinder of 14 subunits composed of two heptameric rings stacked back-to-back. Interacts with the co-chaperonin GroES.

The protein localises to the cytoplasm. It carries out the reaction ATP + H2O + a folded polypeptide = ADP + phosphate + an unfolded polypeptide.. In terms of biological role, together with its co-chaperonin GroES, plays an essential role in assisting protein folding. The GroEL-GroES system forms a nano-cage that allows encapsulation of the non-native substrate proteins and provides a physical environment optimized to promote and accelerate protein folding. In Acinetobacter calcoaceticus, this protein is Chaperonin GroEL.